The sequence spans 114 residues: Small ribosomal subunit protein uS13m (114 aa).

The interval 92-114 (DGLPLRGQRSHTNARTSRKRIRK) is disordered.

This sequence belongs to the universal ribosomal protein uS13 family. Part of the small ribosomal subunit.

It is found in the mitochondrion. Located at the top of the head of the small subunit, it contacts several helices of the 18S rRNA. The chain is Small ribosomal subunit protein uS13m (RPS13) from Oenothera berteroana (Bertero's evening primrose).